The sequence spans 281 residues: MSKYSDAKELAGLTLGKKTEYANQYDASLLQPVPRSLNRDDLELGDSLPFLGHDIWTLYELSWLNSKGLPQVAVGEVYIPATSANLIESKSFKLYLNSYNQTRFATWEEVTERLTQDLSACAGEAVLVEVNPVNHYTNQPIVTMEGECIDDQDIEITSYDFNAALLEGAAGDEQVEEILHSHLLKSNCLITNQPDWGSVEIRYQGAKLDREKLLRYLVSFREHNEFHEQCVERIFTDLMKYCQPTKLTVFARYTRRGGLDINPYRSTEQDKPAHNNRMARQ.

Ile87–Ser89 contributes to the substrate binding site. Position 89-90 (Ser89–Lys90) interacts with NADPH. The Thioimide intermediate role is filled by Cys188. Asp195 (proton donor) is an active-site residue. Residue His227 to Glu228 coordinates substrate. Arg256 to Gly257 is an NADPH binding site. A disordered region spans residues Ile261–Gln281.

This sequence belongs to the GTP cyclohydrolase I family. QueF type 2 subfamily. As to quaternary structure, homodimer.

It is found in the cytoplasm. It catalyses the reaction 7-aminomethyl-7-carbaguanine + 2 NADP(+) = 7-cyano-7-deazaguanine + 2 NADPH + 3 H(+). The protein operates within tRNA modification; tRNA-queuosine biosynthesis. In terms of biological role, catalyzes the NADPH-dependent reduction of 7-cyano-7-deazaguanine (preQ0) to 7-aminomethyl-7-deazaguanine (preQ1). This chain is NADPH-dependent 7-cyano-7-deazaguanine reductase, found in Vibrio campbellii (strain ATCC BAA-1116).